The primary structure comprises 234 residues: Opacity protein opA51 (234 aa).

Residue Ala-1 is a signal peptide.

This sequence belongs to the opacity porin family.

The protein resides in the cell outer membrane. Functionally, implicated in a number of adherence functions. OPA proteins are implicated in pathogenesis and are subject to phase variation. This chain is Opacity protein opA51 (opaB), found in Neisseria gonorrhoeae.